The sequence spans 62 residues: Sperm protamine P1 (62 aa).

Residues 1–62 (MARYRHSRSR…RYSRRRRRRY (62 aa)) form a disordered region.

The protein belongs to the protamine P1 family. In terms of tissue distribution, testis.

It localises to the nucleus. It is found in the chromosome. Functionally, protamines substitute for histones in the chromatin of sperm during the haploid phase of spermatogenesis. They compact sperm DNA into a highly condensed, stable and inactive complex. The protein is Sperm protamine P1 (PRM1) of Wallabia bicolor (Swamp wallaby).